Here is a 2009-residue protein sequence, read N- to C-terminus: ADP-ribosylation factor guanine nucleotide-exchange factor SEC7 (2009 aa).

A disordered region spans residues 1–220 (MSEQNSVVNA…ISLSSNGSNT (220 aa)). A compositionally biased stretch (polar residues) spans 17 to 33 (ISSNVETASSVNPSVKP). The segment covering 37–53 (IKEEAKETNGEDQKCKG) has biased composition (basic and acidic residues). The span at 91–118 (EGEDGDEDEDEDEDEDEDNGDEDDEDVD) shows a compositional bias: acidic residues. Residues 134-143 (SVSGESTESS) show a composition bias toward low complexity. Residues 144 to 154 (SGEDEESDESD) are compositionally biased toward acidic residues. The segment covering 155–165 (GNTSNSSSGDE) has biased composition (low complexity). Positions 166 to 184 (SGSEEEEEEEEEEEEEENA) are enriched in acidic residues. A compositionally biased stretch (polar residues) spans 194–209 (SVPTNDSTAPRSTHTR). Low complexity predominate over residues 210 to 220 (NISLSSNGSNT). 2 positions are modified to phosphoserine: serine 212 and serine 215. Residue threonine 334 is modified to Phosphothreonine. Residues serine 447, serine 452, and serine 455 each carry the phosphoserine modification. The short motif at 653-657 (NYDCN) is the HUS box element. Positions 771–788 (SSARQESRSSLSNDVRSS) are enriched in low complexity. The disordered stretch occupies residues 771–814 (SSARQESRSSLSNDVRSSIMTSNDDFKPTYEDEESRSLSSQNID). Lysine 797 is covalently cross-linked (Glycyl lysine isopeptide (Lys-Gly) (interchain with G-Cter in ubiquitin)). Serine 807 carries the post-translational modification Phosphoserine. In terms of domain architecture, SEC7 spans 824 to 1010 (LKLRKTALSE…LFNEIANNEI (187 aa)). Aspartate 940 contributes to the Mg(2+) binding site. Residues 1017 to 1220 (HQAMLSGDTN…QARVANPRVS (204 aa)) form an HDS1 domain region. Position 1226 is a phosphoserine (serine 1226). Threonine 1240 bears the Phosphothreonine mark. Residues 1708–1723 (GRKSSVSHHQTTNDTS) are compositionally biased toward polar residues. Residues 1708–1803 (GRKSSVSHHQ…KKTKHMKRNE (96 aa)) are disordered. A compositionally biased stretch (basic and acidic residues) spans 1724-1751 (QHSDDDSNDRRENDSNISETVERAHQEE). A phosphoserine mark is found at serine 1741 and serine 1752. Over residues 1764–1777 (LNGQTKLNNGNSVP) the composition is skewed to polar residues. Residues 1836-1883 (FENEDFAHCIPYKEAIRITRLLEKSYEFSRDFNEDYGLRTRLVEARVV) form a C2 domain-interacting region (CIR) region.

As to quaternary structure, interacts with ARF1. Interacts (via C-terminus) with RSP5 ubiquitin ligase.

The protein resides in the cytoplasm. It is found in the golgi apparatus. The protein localises to the trans-Golgi network. Its subcellular location is the cytoplasmic vesicle. It localises to the COPI-coated vesicle membrane. The protein resides in the COPII-coated vesicle membrane. Guanine exchange factor that acts as an activator of ARF1 at the trans-Golgi network and is thus involved in vesicular budding and traffic between compartments of the Golgi apparatus. Activation of Arf (ADP-ribosylation factor) GTPases is essential for vesicle formation via recruitment of cargo adapters and coat proteins necessary for Golgi trafficking. Also plays an essential role in ER-to-Golgi traffic. SEC7 also acts as an effector of two Rab GTPases, YPT1 and YPT31/32. The chain is ADP-ribosylation factor guanine nucleotide-exchange factor SEC7 from Saccharomyces cerevisiae (strain ATCC 204508 / S288c) (Baker's yeast).